The chain runs to 55 residues: ATP synthase F(0) complex subunit 8 (55 aa).

Residues 7–24 (NPWFFIMLLSWLTFSLII) traverse the membrane as a helical segment. The disordered stretch occupies residues 35–55 (NPPSNKTTTHTKTTPWTWPWT). Positions 37–55 (PSNKTTTHTKTTPWTWPWT) are enriched in low complexity.

Belongs to the ATPase protein 8 family. Component of the ATP synthase complex composed at least of ATP5F1A/subunit alpha, ATP5F1B/subunit beta, ATP5MC1/subunit c (homooctomer), MT-ATP6/subunit a, MT-ATP8/subunit 8, ATP5ME/subunit e, ATP5MF/subunit f, ATP5MG/subunit g, ATP5MK/subunit k, ATP5MJ/subunit j, ATP5F1C/subunit gamma, ATP5F1D/subunit delta, ATP5F1E/subunit epsilon, ATP5PF/subunit F6, ATP5PB/subunit b, ATP5PD/subunit d, ATP5PO/subunit OSCP. ATP synthase complex consists of a soluble F(1) head domain (subunits alpha(3) and beta(3)) - the catalytic core - and a membrane F(0) domain - the membrane proton channel (subunits c, a, 8, e, f, g, k and j). These two domains are linked by a central stalk (subunits gamma, delta, and epsilon) rotating inside the F1 region and a stationary peripheral stalk (subunits F6, b, d, and OSCP).

Its subcellular location is the mitochondrion membrane. Subunit 8, of the mitochondrial membrane ATP synthase complex (F(1)F(0) ATP synthase or Complex V) that produces ATP from ADP in the presence of a proton gradient across the membrane which is generated by electron transport complexes of the respiratory chain. ATP synthase complex consist of a soluble F(1) head domain - the catalytic core - and a membrane F(1) domain - the membrane proton channel. These two domains are linked by a central stalk rotating inside the F(1) region and a stationary peripheral stalk. During catalysis, ATP synthesis in the catalytic domain of F(1) is coupled via a rotary mechanism of the central stalk subunits to proton translocation. In vivo, can only synthesize ATP although its ATP hydrolase activity can be activated artificially in vitro. Part of the complex F(0) domain. The chain is ATP synthase F(0) complex subunit 8 from Chaetura pelagica (Chimney swift).